Consider the following 278-residue polypeptide: Putative phosphoenolpyruvate synthase regulatory protein (278 aa).

157–164 lines the ADP pocket; sequence GVSRSGKT.

The protein belongs to the pyruvate, phosphate/water dikinase regulatory protein family. PSRP subfamily.

The enzyme catalyses [pyruvate, water dikinase] + ADP = [pyruvate, water dikinase]-phosphate + AMP + H(+). It catalyses the reaction [pyruvate, water dikinase]-phosphate + phosphate + H(+) = [pyruvate, water dikinase] + diphosphate. Functionally, bifunctional serine/threonine kinase and phosphorylase involved in the regulation of the phosphoenolpyruvate synthase (PEPS) by catalyzing its phosphorylation/dephosphorylation. The sequence is that of Putative phosphoenolpyruvate synthase regulatory protein from Vibrio parahaemolyticus serotype O3:K6 (strain RIMD 2210633).